The primary structure comprises 23 residues: Aldehyde dehydrogenase (23 aa).

The protein belongs to the aldehyde dehydrogenase family.

The catalysed reaction is an aldehyde + NAD(+) + H2O = a carboxylate + NADH + 2 H(+). The chain is Aldehyde dehydrogenase from Moraxella sp. (strain TAE123).